The primary structure comprises 164 residues: Protein-export protein SecB (164 aa).

It belongs to the SecB family. In terms of assembly, homotetramer, a dimer of dimers. One homotetramer interacts with 1 SecA dimer.

The protein resides in the cytoplasm. In terms of biological role, one of the proteins required for the normal export of preproteins out of the cell cytoplasm. It is a molecular chaperone that binds to a subset of precursor proteins, maintaining them in a translocation-competent state. It also specifically binds to its receptor SecA. The sequence is that of Protein-export protein SecB from Herminiimonas arsenicoxydans.